The sequence spans 227 residues: Zinc finger protein 511 (227 aa).

3 C2H2-type zinc fingers span residues 80 to 105 (FTCQVAGCCQVFAAIEDYQHHYHMMH), 107 to 130 (NTCSFCNRAFPSGHLLDVHILEWH), and 144 to 169 (YQCLVESCPEKFKTSQDRKDHMVRLH). A disordered region spans residues 180–204 (PKTNRGPAMPAAADAATRAPTDDSD). Low complexity predominate over residues 186–198 (PAMPAAADAATRA).

Belongs to the krueppel C2H2-type zinc-finger protein family.

Its subcellular location is the nucleus. In terms of biological role, may be involved in transcriptional regulation. The protein is Zinc finger protein 511 (Znf511) of Mus musculus (Mouse).